We begin with the raw amino-acid sequence, 242 residues long: NAD(P)H-quinone oxidoreductase subunit K (242 aa).

The [4Fe-4S] cluster site is built by Cys-60, Cys-61, Cys-125, and Cys-156.

This sequence belongs to the complex I 20 kDa subunit family. As to quaternary structure, NDH-1 can be composed of about 15 different subunits; different subcomplexes with different compositions have been identified which probably have different functions. Requires [4Fe-4S] cluster as cofactor.

It localises to the cellular thylakoid membrane. The catalysed reaction is a plastoquinone + NADH + (n+1) H(+)(in) = a plastoquinol + NAD(+) + n H(+)(out). It catalyses the reaction a plastoquinone + NADPH + (n+1) H(+)(in) = a plastoquinol + NADP(+) + n H(+)(out). NDH-1 shuttles electrons from an unknown electron donor, via FMN and iron-sulfur (Fe-S) centers, to quinones in the respiratory and/or the photosynthetic chain. The immediate electron acceptor for the enzyme in this species is believed to be plastoquinone. Couples the redox reaction to proton translocation, and thus conserves the redox energy in a proton gradient. Cyanobacterial NDH-1 also plays a role in inorganic carbon-concentration. The protein is NAD(P)H-quinone oxidoreductase subunit K of Prochlorococcus marinus (strain SARG / CCMP1375 / SS120).